The following is a 78-amino-acid chain: Large ribosomal subunit protein bL28 (78 aa).

It belongs to the bacterial ribosomal protein bL28 family.

This is Large ribosomal subunit protein bL28 from Methylobacillus flagellatus (strain ATCC 51484 / DSM 6875 / VKM B-1610 / KT).